A 532-amino-acid polypeptide reads, in one-letter code: FAD-dependent monooxygenase hkm7 (532 aa).

FAD-binding positions include 191-193 (RIY) and Asp-261.

It belongs to the PheA/TfdB FAD monooxygenase family.

The protein operates within secondary metabolite biosynthesis. Its function is as follows. FAD-dependent monooxygenase; part of the gene cluster that mediates the biosynthesis of hancockiamides, an unusual new family of N-cinnamoylated piperazines. The NRPS hkm10 and the NmrA-like reductase hkm9 are proposed to convert two molecules of L-Phe to the intermediary piperazine called xenocockiamide A. Xenocockiamide A is then converted to hancockiamide D via a series of hydroxylations and O-methylations. The tyrosinase hkm6 may catalyze an aromatic hydroxylation, then the 2-oxoglutarate-dependent Fe(II) dioxygenase hkm4 and the FAD-dependent phenol hydroxylase hkm7 may catalyze consecutive hydroxylations to install 2 more hydroxy groups, and the methyltransferase hkm8 probably catalyzes two methylations using 2 molecules of S-adenosyl-L-methionine (SAM). The NRPS hkm11 activates and transfers trans-cinnamate supplied by the PAL hkm12 to hancockiamide D and produces hancockiamide A. NRPS Hkm11 has the flexibility to tolerate the bulky hancockiamide G as a substrate and the absence of the acetyl-transferase hkm3 opens up the opportunity for hkm11 to introduce a second N-cinnamoyl moiety. The cytochrome P450 monooxygenase hkm5 catalyzes the methylenedioxy bridge formation, converting hancockiamide A into hancockiamide G. Hkm5 can also convert hancockiamide B into hancockiamide C, and hancockiamide D into hancockiamide H. The N-acetyltransferase hkm3 finally transfers an acetyl group to 1-N of piperazine, converting hancockiamide A into hancockiamide B and hancockiamide G into hancockiamide C. This chain is FAD-dependent monooxygenase hkm7, found in Aspergillus hancockii.